A 471-amino-acid polypeptide reads, in one-letter code: UDP-N-acetylmuramate--L-alanine ligase (471 aa).

125–131 (GTHGKTT) is a binding site for ATP.

Belongs to the MurCDEF family.

The protein localises to the cytoplasm. The catalysed reaction is UDP-N-acetyl-alpha-D-muramate + L-alanine + ATP = UDP-N-acetyl-alpha-D-muramoyl-L-alanine + ADP + phosphate + H(+). It participates in cell wall biogenesis; peptidoglycan biosynthesis. Its function is as follows. Cell wall formation. The protein is UDP-N-acetylmuramate--L-alanine ligase of Kineococcus radiotolerans (strain ATCC BAA-149 / DSM 14245 / SRS30216).